The sequence spans 298 residues: Mitochondrial basic amino acids transporter (298 aa).

6 consecutive transmembrane segments (helical) span residues 2–22, 61–81, 96–116, 153–172, 187–207, and 255–275; these read ALDF…GHPF, GLGS…GVQG, FLAG…MELA, GMVS…FLTY, LLVP…WLST, and LLRA…VLSY. 3 Solcar repeats span residues 2-86, 90-178, and 185-275; these read ALDF…TLRA, DSPL…LTRA, and DRLL…VLSY.

Belongs to the mitochondrial carrier (TC 2.A.29) family.

It is found in the mitochondrion inner membrane. It catalyses the reaction L-lysine(out) + L-arginine(in) = L-lysine(in) + L-arginine(out). The enzyme catalyses L-histidine(out) + L-arginine(in) = L-histidine(in) + L-arginine(out). It carries out the reaction L-ornithine(in) + L-arginine(out) = L-ornithine(out) + L-arginine(in). The catalysed reaction is L-homoarginine(in) + L-arginine(out) = L-homoarginine(out) + L-arginine(in). It catalyses the reaction N(omega)-methyl-L-arginine(in) + L-arginine(out) = N(omega)-methyl-L-arginine(out) + L-arginine(in). The enzyme catalyses L-arginine(in) = L-arginine(out). It carries out the reaction L-lysine(in) = L-lysine(out). The catalysed reaction is L-ornithine(in) = L-ornithine(out). It catalyses the reaction L-histidine(out) = L-histidine(in). Mitochondrial transporter of arginine, lysine, homoarginine, methylarginine and, to a much lesser extent, ornithine and histidine. Does not transport carnitine nor acylcarnitines. Functions by both counter-exchange and uniport mechanisms. Plays a physiological role in the import of basic amino acids into mitochondria for mitochondrial protein synthesis and amino acid degradation. This chain is Mitochondrial basic amino acids transporter (SLC25A29), found in Bos taurus (Bovine).